The primary structure comprises 316 residues: Transaldolase (316 aa).

Lysine 126 acts as the Schiff-base intermediate with substrate in catalysis.

It belongs to the transaldolase family. Type 1 subfamily. As to quaternary structure, homodimer.

The protein localises to the cytoplasm. It carries out the reaction D-sedoheptulose 7-phosphate + D-glyceraldehyde 3-phosphate = D-erythrose 4-phosphate + beta-D-fructose 6-phosphate. It participates in carbohydrate degradation; pentose phosphate pathway; D-glyceraldehyde 3-phosphate and beta-D-fructose 6-phosphate from D-ribose 5-phosphate and D-xylulose 5-phosphate (non-oxidative stage): step 2/3. In terms of biological role, transaldolase is important for the balance of metabolites in the pentose-phosphate pathway. This chain is Transaldolase, found in Methylibium petroleiphilum (strain ATCC BAA-1232 / LMG 22953 / PM1).